Consider the following 224-residue polypeptide: LRP chaperone MESD (224 aa).

The signal sequence occupies residues 1–29 (MAASRWLRAVLLFLCASDLLLLPPPNAYA). The segment at 1-155 (MAASRWLRAV…DRAIFMLRDG (155 aa)) is chaperone domain. Disordered stretches follow at residues 28–49 (YAADTPGEATPPPRKKKDIRDY) and 178–224 (GQMY…REDL). Positions 156–195 (SYAWEIKDFLVSQDRCAEVTLEGQMYPGKGGGSKEKNKTK) are escort domain. Residues 187–224 (GSKEKNKTKPEKAKKKEGDPKPRASKEDNRAGSRREDL) show a composition bias toward basic and acidic residues. N-linked (GlcNAc...) asparagine glycosylation occurs at Asn192. The Prevents secretion from ER motif lies at 221–224 (REDL).

The protein belongs to the MESD family. In terms of assembly, monomer. Interacts with LRP5; the interaction prevents LRP5 from forming aggregates and chaperones LRP6 to the plasma membrane. Interacts with LRP6; the interaction prevents LRP6 from forming aggregates and chaperones LRP6 to the plasma membrane. Interacts with LRP4; the interaction promotes glycosylation of LRP4 and its cell-surface expression. In terms of tissue distribution, expressed in many tissues, but not in skeletal muscles. In the retina expressed in retinal ganglion cells, inner and outer plexiform layers, photoreceptor inner and outer segments and retinal pigment epithelium (at protein level).

The protein resides in the endoplasmic reticulum. Chaperone specifically assisting the folding of beta-propeller/EGF modules within the family of low-density lipoprotein receptors (LDLRs). Acts as a modulator of the Wnt pathway through chaperoning the coreceptors of the canonical Wnt pathway, LRP5 and LRP6, to the plasma membrane. Essential for specification of embryonic polarity and mesoderm induction. Plays an essential role in neuromuscular junction (NMJ) formation by promoting cell-surface expression of LRP4. May regulate phagocytosis of apoptotic retinal pigment epithelium (RPE) cells. The protein is LRP chaperone MESD of Mus musculus (Mouse).